The primary structure comprises 417 residues: Gamma-glutamyl phosphate reductase (417 aa).

The protein belongs to the gamma-glutamyl phosphate reductase family.

The protein localises to the cytoplasm. The catalysed reaction is L-glutamate 5-semialdehyde + phosphate + NADP(+) = L-glutamyl 5-phosphate + NADPH + H(+). The protein operates within amino-acid biosynthesis; L-proline biosynthesis; L-glutamate 5-semialdehyde from L-glutamate: step 2/2. Catalyzes the NADPH-dependent reduction of L-glutamate 5-phosphate into L-glutamate 5-semialdehyde and phosphate. The product spontaneously undergoes cyclization to form 1-pyrroline-5-carboxylate. This is Gamma-glutamyl phosphate reductase from Escherichia coli (strain K12 / MC4100 / BW2952).